The chain runs to 94 residues: Pyrimidine/purine nucleoside phosphorylase (94 aa).

This sequence belongs to the nucleoside phosphorylase PpnP family.

It carries out the reaction a purine D-ribonucleoside + phosphate = a purine nucleobase + alpha-D-ribose 1-phosphate. The catalysed reaction is adenosine + phosphate = alpha-D-ribose 1-phosphate + adenine. The enzyme catalyses cytidine + phosphate = cytosine + alpha-D-ribose 1-phosphate. It catalyses the reaction guanosine + phosphate = alpha-D-ribose 1-phosphate + guanine. It carries out the reaction inosine + phosphate = alpha-D-ribose 1-phosphate + hypoxanthine. The catalysed reaction is thymidine + phosphate = 2-deoxy-alpha-D-ribose 1-phosphate + thymine. The enzyme catalyses uridine + phosphate = alpha-D-ribose 1-phosphate + uracil. It catalyses the reaction xanthosine + phosphate = alpha-D-ribose 1-phosphate + xanthine. In terms of biological role, catalyzes the phosphorolysis of diverse nucleosides, yielding D-ribose 1-phosphate and the respective free bases. Can use uridine, adenosine, guanosine, cytidine, thymidine, inosine and xanthosine as substrates. Also catalyzes the reverse reactions. This is Pyrimidine/purine nucleoside phosphorylase from Psychromonas ingrahamii (strain DSM 17664 / CCUG 51855 / 37).